The chain runs to 283 residues: Pantothenate synthetase (283 aa).

ATP is bound at residue 30 to 37 (MGYLHEGH). Histidine 37 acts as the Proton donor in catalysis. Glutamine 61 serves as a coordination point for (R)-pantoate. Glutamine 61 is a beta-alanine binding site. An ATP-binding site is contributed by 147 to 150 (GQKD). (R)-pantoate is bound at residue glutamine 153. ATP-binding positions include valine 176 and 184-187 (LSSR).

The protein belongs to the pantothenate synthetase family. Homodimer.

The protein localises to the cytoplasm. The enzyme catalyses (R)-pantoate + beta-alanine + ATP = (R)-pantothenate + AMP + diphosphate + H(+). It functions in the pathway cofactor biosynthesis; (R)-pantothenate biosynthesis; (R)-pantothenate from (R)-pantoate and beta-alanine: step 1/1. Catalyzes the condensation of pantoate with beta-alanine in an ATP-dependent reaction via a pantoyl-adenylate intermediate. The chain is Pantothenate synthetase from Moorella thermoacetica (strain ATCC 39073 / JCM 9320).